We begin with the raw amino-acid sequence, 308 residues long: Ribonuclease Z (308 aa).

Positions 60, 62, 64, 65, 140, 209, and 269 each coordinate Zn(2+). Asp-64 serves as the catalytic Proton acceptor.

This sequence belongs to the RNase Z family. In terms of assembly, homodimer. The cofactor is Zn(2+).

It carries out the reaction Endonucleolytic cleavage of RNA, removing extra 3' nucleotides from tRNA precursor, generating 3' termini of tRNAs. A 3'-hydroxy group is left at the tRNA terminus and a 5'-phosphoryl group is left at the trailer molecule.. Functionally, zinc phosphodiesterase, which displays some tRNA 3'-processing endonuclease activity. Probably involved in tRNA maturation, by removing a 3'-trailer from precursor tRNA. This Methanococcus maripaludis (strain DSM 14266 / JCM 13030 / NBRC 101832 / S2 / LL) protein is Ribonuclease Z.